The following is a 37-amino-acid chain: Large ribosomal subunit protein bL36 (37 aa).

It belongs to the bacterial ribosomal protein bL36 family.

The polypeptide is Large ribosomal subunit protein bL36 (Syntrophomonas wolfei subsp. wolfei (strain DSM 2245B / Goettingen)).